A 118-amino-acid polypeptide reads, in one-letter code: Large ribosomal subunit protein uL22 (118 aa).

Belongs to the universal ribosomal protein uL22 family. As to quaternary structure, part of the 50S ribosomal subunit.

Functionally, this protein binds specifically to 23S rRNA; its binding is stimulated by other ribosomal proteins, e.g. L4, L17, and L20. It is important during the early stages of 50S assembly. It makes multiple contacts with different domains of the 23S rRNA in the assembled 50S subunit and ribosome. Its function is as follows. The globular domain of the protein is located near the polypeptide exit tunnel on the outside of the subunit, while an extended beta-hairpin is found that lines the wall of the exit tunnel in the center of the 70S ribosome. The protein is Large ribosomal subunit protein uL22 of Treponema denticola (strain ATCC 35405 / DSM 14222 / CIP 103919 / JCM 8153 / KCTC 15104).